The primary structure comprises 527 residues: Bifunctional purine biosynthesis protein PurH (527 aa).

Residues 9 to 156 (NAKRPIRRAL…KNHPSVAVVV (148 aa)) enclose the MGS-like domain.

Belongs to the PurH family.

The enzyme catalyses (6R)-10-formyltetrahydrofolate + 5-amino-1-(5-phospho-beta-D-ribosyl)imidazole-4-carboxamide = 5-formamido-1-(5-phospho-D-ribosyl)imidazole-4-carboxamide + (6S)-5,6,7,8-tetrahydrofolate. The catalysed reaction is IMP + H2O = 5-formamido-1-(5-phospho-D-ribosyl)imidazole-4-carboxamide. The protein operates within purine metabolism; IMP biosynthesis via de novo pathway; 5-formamido-1-(5-phospho-D-ribosyl)imidazole-4-carboxamide from 5-amino-1-(5-phospho-D-ribosyl)imidazole-4-carboxamide (10-formyl THF route): step 1/1. Its pathway is purine metabolism; IMP biosynthesis via de novo pathway; IMP from 5-formamido-1-(5-phospho-D-ribosyl)imidazole-4-carboxamide: step 1/1. The sequence is that of Bifunctional purine biosynthesis protein PurH from Mycolicibacterium paratuberculosis (strain ATCC BAA-968 / K-10) (Mycobacterium paratuberculosis).